Reading from the N-terminus, the 467-residue chain is Fumarate hydratase class II (467 aa).

Substrate-binding positions include 98–100 (SGT), Arg-126, 129–132 (HPND), 139–141 (SSN), and Thr-187. The active-site Proton donor/acceptor is His-188. Ser-318 is a catalytic residue. Substrate is bound by residues Ser-319 and 324–326 (KVN).

The protein belongs to the class-II fumarase/aspartase family. Fumarase subfamily. Homotetramer.

The protein localises to the cytoplasm. It carries out the reaction (S)-malate = fumarate + H2O. The protein operates within carbohydrate metabolism; tricarboxylic acid cycle; (S)-malate from fumarate: step 1/1. In terms of biological role, involved in the TCA cycle. Catalyzes the stereospecific interconversion of fumarate to L-malate. The protein is Fumarate hydratase class II of Escherichia coli O6:H1 (strain CFT073 / ATCC 700928 / UPEC).